The chain runs to 498 residues: Envelop protein OPG153 (498 aa).

An intrachain disulfide couples Cys43 to Cys342. Residues 352-391 are disordered; it reads ATDTGHHQDSKINIKDDDVDDDDYNPKPTPIPEPYPRPPF. Basic and acidic residues predominate over residues 355 to 367; sequence TGHHQDSKINIKD. Residues 378–390 show a composition bias toward pro residues; that stretch reads KPTPIPEPYPRPP.

Belongs to the orthopoxvirus OPG153 protein family. In terms of assembly, interacts with proteins OPG094 and OPG143. Interacts with OPG154. Interacts with OPG152. Interacts with host laminin.

The protein localises to the virion membrane. Its function is as follows. Envelop protein that mediates acid-dependent endocytosis into host cells. Plays an important role in endocytic entry of the virus by acting as an acid-sensitive membrane fusion suppressor. Low pH in host endosomes triggers conformational changes to allow de-repression of viral fusion complex activity and membrane fusion within vesicles. Also plays a role in bridging the mature virion with structural protein OPG152. In Variola virus (isolate Human/India/Ind3/1967) (VARV), this protein is Envelop protein OPG153 (Protein OPG153).